The sequence spans 522 residues: Nitrogen fixation protein VnfA (522 aa).

Positions 22-183 (LLYEMSQIAT…AQAVELYLVE (162 aa)) are a domain. The 143-residue stretch at 35–177 (DLSSIISILL…ILATTTAQAV (143 aa)) folds into the GAF domain. One can recognise a Sigma-54 factor interaction domain in the interval 210 to 439 (IIGNSKPMLE…LENVIERAML (230 aa)). ATP-binding positions include 238–245 (GESGVGKE) and 301–310 (AAGGTIFLDE). Residues 493–512 (MTEAATHLGLTARVLGLRMG) constitute a DNA-binding region (H-T-H motif).

Its function is as follows. Required for the expression of the V-dependent nitrogen fixation system in Azotobacter vinelandii. It is required for the regulation of nitrogenase 2 transcription. Interacts with sigma-54. The chain is Nitrogen fixation protein VnfA (vnfA) from Azotobacter vinelandii.